The sequence spans 374 residues: UDP-N-acetylglucosamine--N-acetylmuramyl-(pentapeptide) pyrophosphoryl-undecaprenol N-acetylglucosamine transferase (374 aa).

Residues 13 to 15 (TGG), Asn124, Arg165, Ser193, and Gln294 each bind UDP-N-acetyl-alpha-D-glucosamine.

This sequence belongs to the glycosyltransferase 28 family. MurG subfamily.

It is found in the cell inner membrane. It catalyses the reaction di-trans,octa-cis-undecaprenyl diphospho-N-acetyl-alpha-D-muramoyl-L-alanyl-D-glutamyl-meso-2,6-diaminopimeloyl-D-alanyl-D-alanine + UDP-N-acetyl-alpha-D-glucosamine = di-trans,octa-cis-undecaprenyl diphospho-[N-acetyl-alpha-D-glucosaminyl-(1-&gt;4)]-N-acetyl-alpha-D-muramoyl-L-alanyl-D-glutamyl-meso-2,6-diaminopimeloyl-D-alanyl-D-alanine + UDP + H(+). It functions in the pathway cell wall biogenesis; peptidoglycan biosynthesis. In terms of biological role, cell wall formation. Catalyzes the transfer of a GlcNAc subunit on undecaprenyl-pyrophosphoryl-MurNAc-pentapeptide (lipid intermediate I) to form undecaprenyl-pyrophosphoryl-MurNAc-(pentapeptide)GlcNAc (lipid intermediate II). In Rhizobium leguminosarum bv. trifolii (strain WSM2304), this protein is UDP-N-acetylglucosamine--N-acetylmuramyl-(pentapeptide) pyrophosphoryl-undecaprenol N-acetylglucosamine transferase.